Here is a 150-residue protein sequence, read N- to C-terminus: Arginine repressor (150 aa).

This sequence belongs to the ArgR family.

It localises to the cytoplasm. It functions in the pathway amino-acid biosynthesis; L-arginine biosynthesis [regulation]. Functionally, regulates arginine biosynthesis genes. The protein is Arginine repressor of Clostridium botulinum (strain 657 / Type Ba4).